The sequence spans 138 residues: Large ribosomal subunit protein uL16m (138 aa).

This sequence belongs to the universal ribosomal protein uL16 family.

It localises to the mitochondrion. In Chondrus crispus (Carrageen Irish moss), this protein is Large ribosomal subunit protein uL16m (RPL16).